Here is a 578-residue protein sequence, read N- to C-terminus: Asparagine synthetase [glutamine-hydrolyzing] 3 (578 aa).

The active-site For GATase activity is Cys2. Residues 2–185 form the Glutamine amidotransferase type-2 domain; sequence CGILAVLGCV…PGHIYSSKQG (184 aa). L-glutamine-binding positions include 50–54, 75–77, and Asp98; these read RLAIV and NGE. One can recognise an Asparagine synthetase domain in the interval 210-450; that stretch reads VRNTFEKAVI…LPKHILYRQK (241 aa). Residues Leu231, Ile267, and 341–342 each bind ATP; that span reads SG. A compositionally biased stretch (basic and acidic residues) spans 555–572; the sequence is GEDKTEDSRPEKLQKLAE. The disordered stretch occupies residues 555–578; sequence GEDKTEDSRPEKLQKLAEKTPAIV.

It catalyses the reaction L-aspartate + L-glutamine + ATP + H2O = L-asparagine + L-glutamate + AMP + diphosphate + H(+). It functions in the pathway amino-acid biosynthesis; L-asparagine biosynthesis. Functionally, essential for nitrogen assimilation, distribution and remobilization within the plant via the phloem. This chain is Asparagine synthetase [glutamine-hydrolyzing] 3 (ASN3), found in Arabidopsis thaliana (Mouse-ear cress).